A 262-amino-acid polypeptide reads, in one-letter code: Acyl-[acyl-carrier-protein]--UDP-N-acetylglucosamine O-acyltransferase (262 aa).

Belongs to the transferase hexapeptide repeat family. LpxA subfamily. In terms of assembly, homotrimer.

Its subcellular location is the cytoplasm. It carries out the reaction a (3R)-hydroxyacyl-[ACP] + UDP-N-acetyl-alpha-D-glucosamine = a UDP-3-O-[(3R)-3-hydroxyacyl]-N-acetyl-alpha-D-glucosamine + holo-[ACP]. Its pathway is glycolipid biosynthesis; lipid IV(A) biosynthesis; lipid IV(A) from (3R)-3-hydroxytetradecanoyl-[acyl-carrier-protein] and UDP-N-acetyl-alpha-D-glucosamine: step 1/6. Its function is as follows. Involved in the biosynthesis of lipid A, a phosphorylated glycolipid that anchors the lipopolysaccharide to the outer membrane of the cell. In Aliivibrio salmonicida (strain LFI1238) (Vibrio salmonicida (strain LFI1238)), this protein is Acyl-[acyl-carrier-protein]--UDP-N-acetylglucosamine O-acyltransferase.